The chain runs to 469 residues: Glutamate--tRNA ligase (469 aa).

The 'HIGH' region motif lies at proline 9–glycine 19. Zn(2+)-binding residues include cysteine 98, cysteine 100, cysteine 125, and aspartate 127. Residues lysine 236–arginine 240 carry the 'KMSKS' region motif. Lysine 239 lines the ATP pocket.

Belongs to the class-I aminoacyl-tRNA synthetase family. Glutamate--tRNA ligase type 1 subfamily. In terms of assembly, monomer. The cofactor is Zn(2+).

Its subcellular location is the cytoplasm. It carries out the reaction tRNA(Glu) + L-glutamate + ATP = L-glutamyl-tRNA(Glu) + AMP + diphosphate. Its function is as follows. Catalyzes the attachment of glutamate to tRNA(Glu) in a two-step reaction: glutamate is first activated by ATP to form Glu-AMP and then transferred to the acceptor end of tRNA(Glu). This is Glutamate--tRNA ligase from Shewanella woodyi (strain ATCC 51908 / MS32).